The sequence spans 357 residues: UDP-N-acetylglucosamine--N-acetylmuramyl-(pentapeptide) pyrophosphoryl-undecaprenol N-acetylglucosamine transferase (357 aa).

UDP-N-acetyl-alpha-D-glucosamine-binding positions include 15–17 (TGG), Asn-124, Arg-165, Ser-191, and Gln-285.

It belongs to the glycosyltransferase 28 family. MurG subfamily.

It is found in the cell inner membrane. It carries out the reaction di-trans,octa-cis-undecaprenyl diphospho-N-acetyl-alpha-D-muramoyl-L-alanyl-D-glutamyl-meso-2,6-diaminopimeloyl-D-alanyl-D-alanine + UDP-N-acetyl-alpha-D-glucosamine = di-trans,octa-cis-undecaprenyl diphospho-[N-acetyl-alpha-D-glucosaminyl-(1-&gt;4)]-N-acetyl-alpha-D-muramoyl-L-alanyl-D-glutamyl-meso-2,6-diaminopimeloyl-D-alanyl-D-alanine + UDP + H(+). The protein operates within cell wall biogenesis; peptidoglycan biosynthesis. Cell wall formation. Catalyzes the transfer of a GlcNAc subunit on undecaprenyl-pyrophosphoryl-MurNAc-pentapeptide (lipid intermediate I) to form undecaprenyl-pyrophosphoryl-MurNAc-(pentapeptide)GlcNAc (lipid intermediate II). The protein is UDP-N-acetylglucosamine--N-acetylmuramyl-(pentapeptide) pyrophosphoryl-undecaprenol N-acetylglucosamine transferase of Microcystis aeruginosa (strain NIES-843 / IAM M-2473).